The primary structure comprises 218 residues: Ribonuclease S-7 (218 aa).

Positions 1 to 22 (MLNSPLTSVLFVLLFVLSPIYG) are cleaved as a signal peptide. Gln32 lines the RNA pocket. Cys38 and Cys43 are oxidised to a cystine. Asn49 carries an N-linked (GlcNAc...) asparagine glycan. His53 provides a ligand contact to RNA. His53 serves as the catalytic Proton donor. N-linked (GlcNAc...) asparagine glycosylation is present at Asn59. A disulfide bond links Cys67 and Cys116. Residues 91 to 92 (DL), Phe105, 108 to 109 (HE), and 112 to 113 (KH) contribute to the RNA site. Glu109 is a catalytic residue. The Proton acceptor role is filled by His113. An N-linked (GlcNAc...) asparagine glycan is attached at Asn162. 2 disulfides stabilise this stretch: Cys177–Cys207 and Cys190–Cys201.

Belongs to the RNase T2 family.

Its subcellular location is the secreted. It localises to the extracellular space. The enzyme catalyses a ribonucleotidyl-ribonucleotide-RNA + H2O = a 3'-end 3'-phospho-ribonucleotide-RNA + a 5'-end dephospho-ribonucleoside-RNA + H(+). In terms of biological role, self-incompatibility (SI) is the inherited ability of a flowering plant to prevent self-fertilization by discriminating between self and non-self pollen during pollination. In many species of the Solanaceae, self-incompatibility is controlled by the single, multiallelic locus S. This stylar glycoprotein is associated with expression of self-incompatibility in potato. The sequence is that of Ribonuclease S-7 from Nicotiana alata (Winged tobacco).